A 469-amino-acid polypeptide reads, in one-letter code: Ubiquitin carboxyl-terminal hydrolase MINDY-1 (469 aa).

A disordered region spans residues 1–105 (MEHHQPEHPA…RLQELPQSPR (105 aa)). The segment covering 23–44 (ENHKVLSEPKEHPQDKDAKEAD) has biased composition (basic and acidic residues). A Phosphoserine modification is found at S103. C137 functions as the Nucleophile in the catalytic mechanism. H319 serves as the catalytic Proton acceptor. The segment at 388-428 (QVDQDYLIALSLQQQQPPPQGTSGLSDLELAQQLQQEEYQQ) is ubiquitin-binding domain (UBD). Residues 401–469 (QQQPPPQGTS…PKQESDCVLL (69 aa)) are disordered. Positions 415-448 (LELAQQLQQEEYQQHQAAQAAPARAPSPQGRGAA) are enriched in low complexity. Phosphoserine is present on S441. Residues 453–469 (AAERRQRPKQESDCVLL) show a composition bias toward basic and acidic residues.

Belongs to the MINDY deubiquitinase family. FAM63 subfamily.

The enzyme catalyses Thiol-dependent hydrolysis of ester, thioester, amide, peptide and isopeptide bonds formed by the C-terminal Gly of ubiquitin (a 76-residue protein attached to proteins as an intracellular targeting signal).. Its function is as follows. Hydrolase that can specifically remove 'Lys-48'-linked conjugated ubiquitin from proteins. Has exodeubiquitinase activity and has a preference for long polyubiquitin chains. May play a regulatory role at the level of protein turnover. In Bos taurus (Bovine), this protein is Ubiquitin carboxyl-terminal hydrolase MINDY-1 (MINDY1).